We begin with the raw amino-acid sequence, 426 residues long: 3-phosphoshikimate 1-carboxyvinyltransferase (426 aa).

3 residues coordinate 3-phosphoshikimate: K22, S23, and R27. Position 22 (K22) interacts with phosphoenolpyruvate. The phosphoenolpyruvate site is built by G96 and R124. Positions 170, 171, 172, 198, 314, 337, and 341 each coordinate 3-phosphoshikimate. A phosphoenolpyruvate-binding site is contributed by Q172. The active-site Proton acceptor is the D314. Residues R345, R387, and K412 each coordinate phosphoenolpyruvate.

The protein belongs to the EPSP synthase family. As to quaternary structure, monomer.

The protein localises to the cytoplasm. It carries out the reaction 3-phosphoshikimate + phosphoenolpyruvate = 5-O-(1-carboxyvinyl)-3-phosphoshikimate + phosphate. Its pathway is metabolic intermediate biosynthesis; chorismate biosynthesis; chorismate from D-erythrose 4-phosphate and phosphoenolpyruvate: step 6/7. Its function is as follows. Catalyzes the transfer of the enolpyruvyl moiety of phosphoenolpyruvate (PEP) to the 5-hydroxyl of shikimate-3-phosphate (S3P) to produce enolpyruvyl shikimate-3-phosphate and inorganic phosphate. The sequence is that of 3-phosphoshikimate 1-carboxyvinyltransferase from Shewanella woodyi (strain ATCC 51908 / MS32).